The chain runs to 269 residues: 4-hydroxy-4-methyl-2-oxoglutarate aldolase cghB (269 aa).

H48 serves as the catalytic Proton acceptor. Residues E155 and D181 each coordinate a divalent metal cation. D181 contacts substrate.

Belongs to the HpcH/HpaI aldolase family. As to quaternary structure, homohexamer; trimer of dimers. Co(2+) serves as cofactor. It depends on Mn(2+) as a cofactor. The cofactor is Zn(2+). Requires Fe(2+) as cofactor. Mg(2+) is required as a cofactor.

The catalysed reaction is 4-hydroxy-4-methyl-2-oxoglutarate = 2 pyruvate. It functions in the pathway secondary metabolite biosynthesis. 4-hydroxy-4-methyl-2-oxoglutarate aldolase; part of the gene cluster that mediates the biosynthesis of the tetramic acid Sch210972, a potential anti-HIV fungal natural product that contains a decalin core. The PKS module of cghG together with the enoylreductase cghC catalyze the formation of the polyketide unit which is then conjugated to 4-hydroxyl-4-methyl glutamate (HMG) by the condensation domain of the cghG NRPS module. One unique structural feature of Sch210972 is the tetramic acid motif proposed to be derived from the non-proteinogenic amino acid HMG, by a Dieckmann-type condensation catalyzed by the reductase domain of cghG. The aldolase cghB catalyzes the aldol condensation of 2 molecules of pyruvic acid to yield the intermediate 4-hydroxyl-4-methyl-2-oxoglutarate (HMOG), which can then be stereoselectively transaminated by an unidentified enzyme to form HMG. The Diels-Alderase cghA then uses the Dieckmann product released by cghG as substrate and catalyzes the Diels-Alder cycloaddition to form the decalin ring of Sch210972. CghA also suppresses the nonenzymatic formation of the alternative stereoisomer. This Chaetomium globosum (strain ATCC 6205 / CBS 148.51 / DSM 1962 / NBRC 6347 / NRRL 1970) (Soil fungus) protein is 4-hydroxy-4-methyl-2-oxoglutarate aldolase cghB.